We begin with the raw amino-acid sequence, 226 residues long: UPF0758 protein SGO_1229 (226 aa).

In terms of domain architecture, MPN spans 103-225 (RILSSQKLAK…YYSYREETDL (123 aa)). Histidine 174, histidine 176, and aspartate 187 together coordinate Zn(2+). A JAMM motif motif is present at residues 174–187 (HNHPSGATRPSRDD).

This sequence belongs to the UPF0758 family.

The polypeptide is UPF0758 protein SGO_1229 (Streptococcus gordonii (strain Challis / ATCC 35105 / BCRC 15272 / CH1 / DL1 / V288)).